Consider the following 443-residue polypeptide: tRNA modification GTPase MnmE (443 aa).

Residues R19, E78, and K118 each coordinate (6S)-5-formyl-5,6,7,8-tetrahydrofolate. Positions 214 to 366 (GFKIAIIGPT…LISKIKNKLK (153 aa)) constitute a TrmE-type G domain. K(+) is bound at residue N224. Residues 224-229 (NAGKSS), 243-249 (SEIAGTT), and 268-271 (DTAG) contribute to the GTP site. Position 228 (S228) interacts with Mg(2+). Residues S243, I245, and T248 each contribute to the K(+) site. A Mg(2+)-binding site is contributed by T249. A (6S)-5-formyl-5,6,7,8-tetrahydrofolate-binding site is contributed by K443.

This sequence belongs to the TRAFAC class TrmE-Era-EngA-EngB-Septin-like GTPase superfamily. TrmE GTPase family. Homodimer. Heterotetramer of two MnmE and two MnmG subunits. It depends on K(+) as a cofactor.

It is found in the cytoplasm. Functionally, exhibits a very high intrinsic GTPase hydrolysis rate. Involved in the addition of a carboxymethylaminomethyl (cmnm) group at the wobble position (U34) of certain tRNAs, forming tRNA-cmnm(5)s(2)U34. In Pelagibacter ubique (strain HTCC1062), this protein is tRNA modification GTPase MnmE.